The chain runs to 282 residues: UPF0294 protein VIBHAR_03217 (282 aa).

This sequence belongs to the UPF0294 family.

It localises to the cytoplasm. The sequence is that of UPF0294 protein VIBHAR_03217 from Vibrio campbellii (strain ATCC BAA-1116).